The sequence spans 290 residues: Fructose-1,6-bisphosphatase class 1 (290 aa).

The Mg(2+) site is built by Glu78, Asp96, Leu98, and Asp99. Substrate-binding positions include 99 to 102 (DGSS), Tyr201, and Lys226. Residue Glu232 participates in Mg(2+) binding.

Belongs to the FBPase class 1 family. As to quaternary structure, homotetramer. Requires Mg(2+) as cofactor.

Its subcellular location is the cytoplasm. It carries out the reaction beta-D-fructose 1,6-bisphosphate + H2O = beta-D-fructose 6-phosphate + phosphate. It participates in carbohydrate biosynthesis; gluconeogenesis. The protein is Fructose-1,6-bisphosphatase class 1 of Helicobacter acinonychis (strain Sheeba).